A 714-amino-acid chain; its full sequence is Stellatatriene synthase (714 aa).

Positions Met1–Asp325 are stellata-2,6,19-trien synthase. 2 residues coordinate Mg(2+): Asp92 and Asp96. The DDXXD motif 1 signature appears at Asp92–Asp96. The NSE motif signature appears at Tyr276–Lys284. Positions His326–Thr713 are geranylgeranyl diphosphate synthase. Positions Lys332 to Ser356 are disordered. Residues Ser341 to Ser356 show a composition bias toward low complexity. Isopentenyl diphosphate contacts are provided by Lys434, Arg437, and His466. Positions 473 and 477 each coordinate Mg(2+). A DDXXD motif 2 motif is present at residues Asp473–Asp477. Arg482 contacts dimethylallyl diphosphate. Arg483 contacts isopentenyl diphosphate. Residues Lys560, Thr561, Gln596, Asn603, Lys613, and Lys623 each contribute to the dimethylallyl diphosphate site.

The protein in the N-terminal section; belongs to the terpene synthase family. It in the C-terminal section; belongs to the FPP/GGPP synthase family. In terms of assembly, hexamer.

It carries out the reaction 4 isopentenyl diphosphate + dimethylallyl diphosphate = (2E,6E,10E,14E)-geranylfarnesyl diphosphate + 4 diphosphate. The enzyme catalyses (2E,6E,10E,14E)-geranylfarnesyl diphosphate = stellata-2,6,19-triene + diphosphate. The protein operates within secondary metabolite biosynthesis; terpenoid biosynthesis. Its function is as follows. Multifunctional diterpene synthase; part of the gene cluster that mediates the biosynthesis of the sesterterpene stellatic acid. The first step in the pathway is performed by the stellatatriene synthase that possesses both prenyl transferase and terpene cyclase activity, converting isopentenyl diphosphate and dimethylallyl diphosphate into geranylgeranyl diphosphate (GGDP) and then converting GGDP into stellata-2,6,19-triene. The cytochrome P450 monooxygenase Stl-P450 then catalyzes three successive oxidation reactions on the C-20 methyl group to generate the carboxylic acid of stellatic acid. The protein is Stellatatriene synthase of Emericella variicolor (Aspergillus stellatus).